The following is a 103-amino-acid chain: UPF0235 protein Rleg2_3707 (103 aa).

This sequence belongs to the UPF0235 family.

The polypeptide is UPF0235 protein Rleg2_3707 (Rhizobium leguminosarum bv. trifolii (strain WSM2304)).